Here is a 74-residue protein sequence, read N- to C-terminus: Mitochondrial import receptor subunit TOM6 homolog (74 aa).

Residues 1 to 14 (MASSGAGVTAAGSA) are compositionally biased toward low complexity. The interval 1–24 (MASSGAGVTAAGSANEAPEIPDNV) is disordered. A2 is subject to N-acetylalanine.

This sequence belongs to the Tom6 family. Forms part of the preprotein translocase complex of the outer mitochondrial membrane (TOM complex) which consists of at least 7 different proteins (TOMM5, TOMM6, TOMM7, TOMM20, TOMM22, TOMM40 and TOMM70).

It is found in the mitochondrion outer membrane. This is Mitochondrial import receptor subunit TOM6 homolog (TOMM6) from Bos taurus (Bovine).